The chain runs to 970 residues: Transcriptional activator protein DAL81 (970 aa).

Disordered stretches follow at residues 1 to 44 (MDPH…NHDI), 64 to 95 (NILREKGGSQQQQHQQQQQQQQQQQQQQQQQS), and 118 to 140 (DNVSNSADHNGSNSNNNNNNNDI). Composition is skewed to low complexity over residues 15-41 (TKSVKATTKNSSTNNNVNSNNSNNNSN), 73-94 (QQQQHQQQQQQQQQQQQQQQQQ), and 121-140 (SNSADHNGSNSNNNNNNNDI). The zn(2)-C6 fungal-type DNA-binding region spans 150–179 (CNQCRLKKTKCNYFPDLGNCLECETSRTKC). Residues 807–823 (SFPNGTTSTTTPVNPTS) show a composition bias toward low complexity. Residues 807–970 (SFPNGTTSTT…VTINTRETPL (164 aa)) are disordered. Composition is skewed to polar residues over residues 824 to 836 (RQTQLESQGSPAI) and 858 to 870 (KTSQSSPNVTPSH). A Phosphoserine modification is found at S833. Positions 875 to 894 (PPSNTSSPRVNSSTNVNSNT) are enriched in low complexity. A compositionally biased stretch (polar residues) spans 895–906 (QMNASPLTSINE). Over residues 907–938 (TRQESGDAADEKTAGRERTANEESSTELKDDN) the composition is skewed to basic and acidic residues. Composition is skewed to polar residues over residues 939–954 (PNSNQETSATGNQTIK) and 961–970 (VTINTRETPL).

The protein localises to the nucleus. Positive regulation of genes required for catabolism of GABA (UGA4, UGA1, and UGA2), urea (DUR1 and DUR2), arginine and allantoin. This is Transcriptional activator protein DAL81 (DAL81) from Saccharomyces cerevisiae (strain ATCC 204508 / S288c) (Baker's yeast).